The sequence spans 244 residues: uncharacterized protein (244 aa).

The next 6 membrane-spanning stretches (helical) occupy residues 22 to 42 (IMLQ…LLSF), 63 to 83 (FIFS…WGLT), 110 to 130 (VILL…EAFA), 140 to 160 (IMSL…NLTV), 186 to 206 (GVLF…IFQL), and 213 to 233 (AVFD…MLVV).

The protein resides in the cell membrane. This is an uncharacterized protein from Haemophilus influenzae (strain ATCC 51907 / DSM 11121 / KW20 / Rd).